The chain runs to 260 residues: Aspartate/glutamate leucyltransferase (260 aa).

Residues 241 to 251 are compositionally biased toward basic and acidic residues; that stretch reads DRLPEEGDRGP. The disordered stretch occupies residues 241 to 260; the sequence is DRLPEEGDRGPARFPASLTE.

Belongs to the R-transferase family. Bpt subfamily.

It localises to the cytoplasm. The enzyme catalyses N-terminal L-glutamyl-[protein] + L-leucyl-tRNA(Leu) = N-terminal L-leucyl-L-glutamyl-[protein] + tRNA(Leu) + H(+). It carries out the reaction N-terminal L-aspartyl-[protein] + L-leucyl-tRNA(Leu) = N-terminal L-leucyl-L-aspartyl-[protein] + tRNA(Leu) + H(+). In terms of biological role, functions in the N-end rule pathway of protein degradation where it conjugates Leu from its aminoacyl-tRNA to the N-termini of proteins containing an N-terminal aspartate or glutamate. This Gluconacetobacter diazotrophicus (strain ATCC 49037 / DSM 5601 / CCUG 37298 / CIP 103539 / LMG 7603 / PAl5) protein is Aspartate/glutamate leucyltransferase.